An 822-amino-acid polypeptide reads, in one-letter code: BDNF/NT-3 growth factors receptor (822 aa).

The signal sequence occupies residues 1-31 (MSSWIRWHGPAMARLWGFCWLVVGFWRAAFA). 2 cysteine pairs are disulfide-bonded: Cys32/Cys38 and Cys36/Cys45. Residues 32–61 (CPTSCKCSASRIWCSDPSPGIVAFPRLEPN) form the LRRNT domain. Residues 32 to 430 (CPTSCKCSAS…DVTDKTGREH (399 aa)) lie on the Extracellular side of the membrane. Residues Asn67, Asn95, and Asn121 are each glycosylated (N-linked (GlcNAc...) asparagine). LRR repeat units lie at residues 92–113 (GLRN…AFLK) and 116–137 (NLQH…HFRH). The region spanning 148 to 196 (NPFTCSCDIMWIKTLQEAKSSPDTQDLYCLNESSKNIPLANLQIPNCGL) is the LRRCT domain. 2 disulfide bridges follow: Cys152–Cys176 and Cys154–Cys194. 8 N-linked (GlcNAc...) asparagine glycosylation sites follow: Asn178, Asn205, Asn241, Asn254, Asn280, Asn325, Asn338, and Asn412. Ig-like C2-type domains follow at residues 197-282 (PSAN…VNLT) and 295-365 (PTSD…IAKN). A disulfide bridge links Cys218 with Cys266. A disulfide bond links Cys302 and Cys345. Residues 431 to 454 (LSVYAVVVIASVVGFCLLVMLFLL) traverse the membrane as a helical segment. Positions 455-466 (KLARHSKFGMKG) are interaction with MAPK8IP3/JIP3. Residues 455–822 (KLARHSKFGM…ASPVYLDILG (368 aa)) are Cytoplasmic-facing. Residues 475–498 (DDSASPLHHISNGSNTPSSSEGGP) are disordered. The segment covering 485-495 (SNGSNTPSSSE) has biased composition (polar residues). Tyr516 is subject to Phosphotyrosine; by autocatalysis. In terms of domain architecture, Protein kinase spans 538-807 (IVLKRELGEG…KNIKGIHTLL (270 aa)). Residues 544–552 (LGEGAFGKV) and Lys572 contribute to the ATP site. Asp676 acts as the Proton acceptor in catalysis. Tyr702, Tyr706, Tyr707, and Tyr817 each carry phosphotyrosine; by autocatalysis.

It belongs to the protein kinase superfamily. Tyr protein kinase family. Insulin receptor subfamily. Exists in a dynamic equilibrium between monomeric (low affinity) and dimeric (high affinity) structures. Interacts (phosphorylated upon activation by BDNF) with SHC1; mediates SHC1 phosphorylation and activation. Interacts (phosphorylated upon activation by BDNF) with PLCG1 and/or PLCG2; mediates PLCG1 phosphorylation and activation. Interacts with SH2B1 and SH2B2. Interacts with NGFR; may regulate the ligand specificity of the receptor. Interacts with SORCS2; this interaction is important for normal targeting to post-synaptic densities in response to high-frequency stimulation. Interacts (phosphorylated upon ligand-binding) with SH2D1A; regulates NTRK2. Interacts with SQSTM1 and KIDINS220. Interacts (phosphorylated upon ligand-binding) with FRS2; activates the MAPK signaling pathway. Interacts with APPL1. Interacts with MAPK8IP3/JIP3 and KLC1; interaction with KLC1 is mediated by MAPK8IP3/JIP3. Interacts with SORL1; this interaction facilitates NTRK2 trafficking between synaptic plasma membranes, postsynaptic densities and cell soma, hence positively regulates BDNF signaling. Interacts with SLITRK2. Phosphorylated. Undergoes ligand-mediated autophosphorylation that is required for interaction with SHC1 and PLCG1 and other downstream effectors. Isoform TrkB-T-Shc is not phosphorylated. Post-translationally, ubiquitinated. Undergoes polyubiquitination upon activation; regulated by NGFR. Ubiquitination regulates the internalization of the receptor. As to expression, isoform TrkB is expressed in the central and peripheral nervous system. In the central nervous system (CNS), expression is observed in the cerebral cortex, hippocampus, thalamus, choroid plexus, granular layer of the cerebellum, brain stem, and spinal cord. In the peripheral nervous system, it is expressed in many cranial ganglia, the ophthalmic nerve, the vestibular system, multiple facial structures, the submaxillary glands, and dorsal root ganglia. Isoform TrkB-T1 is mainly expressed in the brain but also detected in other tissues including pancreas, kidney and heart. Isoform TrkB-T-Shc is predominantly expressed in the brain.

It is found in the cell membrane. The protein resides in the endosome membrane. The protein localises to the early endosome membrane. It localises to the cell projection. Its subcellular location is the axon. It is found in the dendrite. The protein resides in the cytoplasm. The protein localises to the perinuclear region. It localises to the postsynaptic density. The catalysed reaction is L-tyrosyl-[protein] + ATP = O-phospho-L-tyrosyl-[protein] + ADP + H(+). With respect to regulation, the neuronal activity and the influx of calcium positively regulate the kinase activity and the internalization of the receptor which are both important for active signaling. Regulated by NGFR that may control the internalization of the receptor. NGFR may also stimulate the activation by BDNF compared to NTF3 and NTF4. SH2D1A inhibits the autophosphorylation of the receptor, and alters the recruitment and activation of downstream effectors and signaling cascades. The formation of active receptors dimers able to fully transduce the ligand-mediated signal, may be negatively regulated by the formation of inactive heterodimers with the non-catalytic isoforms. Its function is as follows. Receptor tyrosine kinase involved in the development and the maturation of the central and the peripheral nervous systems through regulation of neuron survival, proliferation, migration, differentiation, and synapse formation and plasticity. Receptor for BDNF/brain-derived neurotrophic factor and NTF4/neurotrophin-4. Alternatively can also bind NTF3/neurotrophin-3 which is less efficient in activating the receptor but regulates neuron survival through NTRK2. Upon ligand-binding, undergoes homodimerization, autophosphorylation and activation. Recruits, phosphorylates and/or activates several downstream effectors including SHC1, FRS2, SH2B1, SH2B2 and PLCG1 that regulate distinct overlapping signaling cascades. Through SHC1, FRS2, SH2B1, SH2B2 activates the GRB2-Ras-MAPK cascade that regulates for instance neuronal differentiation including neurite outgrowth. Through the same effectors controls the Ras-PI3 kinase-AKT1 signaling cascade that mainly regulates growth and survival. Through PLCG1 and the downstream protein kinase C-regulated pathways controls synaptic plasticity. Thereby, plays a role in learning and memory by regulating both short term synaptic function and long-term potentiation. PLCG1 also leads to NF-Kappa-B activation and the transcription of genes involved in cell survival. Hence, it is able to suppress anoikis, the apoptosis resulting from loss of cell-matrix interactions. May also play a role in neutrophin-dependent calcium signaling in glial cells and mediate communication between neurons and glia. The chain is BDNF/NT-3 growth factors receptor (NTRK2) from Homo sapiens (Human).